We begin with the raw amino-acid sequence, 59 residues long: Large ribosomal subunit protein eL37 (59 aa).

Zn(2+)-binding residues include Cys-20, Cys-23, Cys-35, and Cys-38. The C4-type zinc finger occupies Cys-20–Cys-38.

The protein belongs to the eukaryotic ribosomal protein eL37 family. It depends on Zn(2+) as a cofactor.

Functionally, binds to the 23S rRNA. The polypeptide is Large ribosomal subunit protein eL37 (rpl37e) (Archaeoglobus fulgidus (strain ATCC 49558 / DSM 4304 / JCM 9628 / NBRC 100126 / VC-16)).